The following is a 412-amino-acid chain: MGFITKAIPIVLAALSTVNGARILEAGPHAETIPNKYIVVMKKDVSEESFSAHTTWLSQTLNSRLMRRAGSSKPMAGMQNKYSLGGIFRAYSGEFDDAMIKDISSHDDVDFIEPDFVVRATTNGTNLTHQDNVPSWGLARVSTRKPGGTTYYYDPSAGKGVTAYVIDTGIDTKHEDFGGRAKWGKNLVDQMDEDCNGHGTHVAGTVGGTKYGLAKGVSLVAVKVLDCEGSGSNSGVIKGMEWAMMDASGGGNGTAKAAGKAVMNMSLGGPRSEATNQAAKAISDAGIFLAVAAGNENMDAQHSSPASEPSVCTVAASTKDDGKANFSNFGSVVDVYAPGKDIVSLKPGGGTDTLSGTSMASPHVCGLGAYLIGLGKQGGPGLCDTIKEMANDAIQSPGEDTTSKLIYNGSGK.

The signal sequence occupies residues 1–20 (MGFITKAIPIVLAALSTVNG). A propeptide spanning residues 21-127 (ARILEAGPHA…VRATTNGTNL (107 aa)) is cleaved from the precursor. An Inhibitor I9 domain is found at 36–120 (KYIVVMKKDV…FIEPDFVVRA (85 aa)). N-linked (GlcNAc...) asparagine glycans are attached at residues N123 and N126. In terms of domain architecture, Peptidase S8 spans 135-412 (SWGLARVSTR…SKLIYNGSGK (278 aa)). Residues D167 and H198 each act as charge relay system in the active site. 3 N-linked (GlcNAc...) asparagine glycosylation sites follow: N252, N264, and N325. S358 serves as the catalytic Charge relay system. N-linked (GlcNAc...) asparagine glycosylation is present at N408.

Belongs to the peptidase S8 family.

Its subcellular location is the secreted. In terms of biological role, secreted subtilisin-like serine protease with keratinolytic activity that contributes to pathogenicity. The chain is Subtilisin-like protease 6 (SUB6) from Trichophyton verrucosum (Cattle ringworm fungus).